A 213-amino-acid polypeptide reads, in one-letter code: Skin granule protein (213 aa).

The signal sequence occupies residues 1–26 (METMYHRFLCIPFLLILGLAQGQSKG). 3 tandem repeats follow at residues 27–48 (LQTVTTFRTGLKPIDVTAIRTG), 49–70 (LQPIATFHTGQKPIDVTAIRTG), and 71–92 (LQPIATFHTGLQPVDVTAIRTG). The tract at residues 27–104 (LQTVTTFRTG…PIATFQTGVQ (78 aa)) is 4 X 22 AA approximate tandem repeats. Residues 93–104 (LQPIATFQTGVQ) form a 4; truncated repeat. The interval 162-213 (WHGGRNGHKMKKLGKKKHHKNRHGGKNHHKMKKIGKHHGGGRKFGKKHRHHK) is disordered. A compositionally biased stretch (basic residues) spans 166-213 (RNGHKMKKLGKKKHHKNRHGGKNHHKMKKIGKHHGGGRKFGKKHRHHK).

Its subcellular location is the secreted. This is Skin granule protein (sgp) from Xenopus laevis (African clawed frog).